Here is a 251-residue protein sequence, read N- to C-terminus: ATP synthase delta chain, chloroplastic (251 aa).

A chloroplast-targeting transit peptide spans 1-64 (MASLQHTTAS…STGGALGARM (64 aa)).

This sequence belongs to the ATPase delta chain family. As to quaternary structure, F-type ATPases have 2 components, CF(1) - the catalytic core - and CF(0) - the membrane proton channel. CF(1) has five subunits: alpha(3), beta(3), gamma(1), delta(1), epsilon(1). CF(0) has three main subunits: a, b and c.

The protein localises to the plastid. It is found in the chloroplast thylakoid membrane. Its function is as follows. This protein seems to be part of the stalk that links CF(0) to CF(1). It either transmits conformational changes from CF(0) into CF(1) or is implicated in proton conduction. This chain is ATP synthase delta chain, chloroplastic (ATPD), found in Pisum sativum (Garden pea).